The following is a 206-amino-acid chain: uncharacterized protein (206 aa).

A helical membrane pass occupies residues 166 to 186 (FYTGLSVIVGGATALALGLFF).

Its subcellular location is the membrane. This is an uncharacterized protein from Dictyostelium discoideum (Social amoeba).